Here is a 614-residue protein sequence, read N- to C-terminus: DNA mismatch repair protein MutL (614 aa).

The disordered stretch occupies residues 355 to 411; it reads PLSTGRVSEADPSNYATQSKFDEKPRESGSQGQSSSISAPSSYSRGGEYSARSQPEL. Over residues 382–401 the composition is skewed to low complexity; it reads SGSQGQSSSISAPSSYSRGG.

Belongs to the DNA mismatch repair MutL/HexB family.

In terms of biological role, this protein is involved in the repair of mismatches in DNA. It is required for dam-dependent methyl-directed DNA mismatch repair. May act as a 'molecular matchmaker', a protein that promotes the formation of a stable complex between two or more DNA-binding proteins in an ATP-dependent manner without itself being part of a final effector complex. The sequence is that of DNA mismatch repair protein MutL from Shewanella woodyi (strain ATCC 51908 / MS32).